Reading from the N-terminus, the 674-residue chain is Glutaminase kidney isoform, mitochondrial (674 aa).

The N-terminal 54 residues, 1-54, are a transit peptide targeting the mitochondrion; sequence MMRLRGSAMLRELLLRPPAAVGAVLRRAQPLGTLCRRPRGGSRPTAGLVAAARL. Residues 56 to 123 are disordered; it reads PWWGGGGRAK…PGETDAFGNS (68 aa). A compositionally biased stretch (gly residues) spans 58-71; it reads WGGGGRAKGPGAGG. Positions 89–101 are enriched in low complexity; it reads PPQQQQQQQQQPG. An N6-succinyllysine mark is found at K135 and K169. S291 is a substrate binding site. K316 bears the N6-acetyllysine mark. Residues 320 to 327 form a highly mobile activation loop region; that stretch reads GLRFNKLF. N340, E386, N393, Y419, Y471, and V489 together coordinate substrate. 2 ANK repeats span residues 590-619 and 624-653; these read DSRT…VNPF and WNNT…QYTP. A disordered region spans residues 652–674; sequence TPQGDSDDGKGNQTVHKNLDGLL. Position 657 is a phosphoserine (S657).

It belongs to the glutaminase family. In terms of assembly, homotetramer, dimer of dimers. The tetramers can assemble into rod-like oligomers (in vitro), but the physiological significance of this is not clear. Interacts with RAF1 and MAP2K2. Interacts with ATCAY; the interaction is direct and may control GLS localization, negatively regulating its activity. Synthesized as a 74-kDa cytosolic precursor which is proteolytically processed by the mitochondrial-processing peptidase (MPP) via a 72-kDa intermediate to yield the mature mitochondrial 68- and 65-kDa subunits.

The protein localises to the mitochondrion. It is found in the cytoplasm. Its subcellular location is the cytosol. The protein resides in the mitochondrion matrix. It carries out the reaction L-glutamine + H2O = L-glutamate + NH4(+). Isoform 1 and isoform 2 are activated by phosphate, due to increased affinity for glutamine. At phosphate concentrations above 10 mM, isoform 2 is more efficient than isoform 1. Functionally, catalyzes the first reaction in the primary pathway for the renal catabolism of glutamine. Plays a role in maintaining acid-base homeostasis. Regulates the levels of the neurotransmitter glutamate, the main excitatory neurotransmitter in the brain. This Mus musculus (Mouse) protein is Glutaminase kidney isoform, mitochondrial (Gls).